The sequence spans 448 residues: Gametocyte surface protein P45/48 (448 aa).

Residues 1–27 form the signal peptide; that stretch reads MMLYISAKKAQVAFILYIVLVLRIISG. In terms of domain architecture, 6-Cys 1 spans 45–182; the sequence is IGYKCNFSNE…AMVHVRVLKY (138 aa). Intrachain disulfides connect C49–C71 and C102–C156. N-linked (GlcNAc...) asparagine glycans are attached at residues N50, N131, N190, N204, N254, N299, and N303. A 6-Cys 2 domain is found at 294-426; sequence VIHGCNFSSN…KSAYMTVTID (133 aa). Cystine bridges form between C298–C327, C344–C412, and C352–C410. A lipid anchor (GPI-anchor amidated aspartate) is attached at D426. Residues 427–448 constitute a propeptide, removed in mature form; sequence SAYYGFLAKTFIFLIVAILLYI.

As to quaternary structure, heterodimer; heterodimerizes with PF230.

It localises to the cell surface. The protein resides in the cell membrane. Gametocyte surface protein required for male fertility. The sequence is that of Gametocyte surface protein P45/48 (PF45/48) from Plasmodium falciparum (isolate 3D7).